The chain runs to 223 residues: GTP cyclohydrolase 1 (223 aa).

Zn(2+)-binding residues include cysteine 114, histidine 117, and cysteine 185.

The protein belongs to the GTP cyclohydrolase I family. As to quaternary structure, homomer.

It catalyses the reaction GTP + H2O = 7,8-dihydroneopterin 3'-triphosphate + formate + H(+). The protein operates within cofactor biosynthesis; 7,8-dihydroneopterin triphosphate biosynthesis; 7,8-dihydroneopterin triphosphate from GTP: step 1/1. This Chlorobium phaeovibrioides (strain DSM 265 / 1930) (Prosthecochloris vibrioformis (strain DSM 265)) protein is GTP cyclohydrolase 1.